A 401-amino-acid polypeptide reads, in one-letter code: Glutamyl-tRNA reductase (401 aa).

Residues 45–48 (TCNR), Ser101, 106–108 (EDQ), and Gln112 each bind substrate. Cys46 serves as the catalytic Nucleophile. Residue 177 to 182 (GYGDVG) coordinates NADP(+).

It belongs to the glutamyl-tRNA reductase family. As to quaternary structure, homodimer.

It catalyses the reaction (S)-4-amino-5-oxopentanoate + tRNA(Glu) + NADP(+) = L-glutamyl-tRNA(Glu) + NADPH + H(+). It participates in porphyrin-containing compound metabolism; protoporphyrin-IX biosynthesis; 5-aminolevulinate from L-glutamyl-tRNA(Glu): step 1/2. Functionally, catalyzes the NADPH-dependent reduction of glutamyl-tRNA(Glu) to glutamate 1-semialdehyde (GSA). This is Glutamyl-tRNA reductase from Clostridium botulinum (strain Alaska E43 / Type E3).